The following is a 397-amino-acid chain: Probable N-succinyldiaminopimelate aminotransferase DapC (397 aa).

Pyridoxal 5'-phosphate contacts are provided by residues 109 to 110 (GS) and 218 to 222 (DGMAE). N6-(pyridoxal phosphate)lysine is present on Lys-232.

It belongs to the class-III pyridoxal-phosphate-dependent aminotransferase family. As to quaternary structure, homodimer. It depends on pyridoxal 5'-phosphate as a cofactor.

It is found in the cytoplasm. The enzyme catalyses N-succinyl-(2S,6S)-2,6-diaminopimelate + 2-oxoglutarate = (S)-2-succinylamino-6-oxoheptanedioate + L-glutamate. The protein operates within amino-acid biosynthesis; L-lysine biosynthesis via DAP pathway; LL-2,6-diaminopimelate from (S)-tetrahydrodipicolinate (succinylase route): step 2/3. Involved in the lysine biosynthetic pathways. It catalyzes the transfer of an amino group from L-glutamate to N-succinyl-2-l-amino-6-oxoheptanedioate (N-succinyl-2-l-amino-6-ketopimelate) in a PLP-dependent reaction, yielding as products N-succinyl-l-2,6-diaminoheptanedioate (N-succinyl-diaminopimelate) and 2-oxoglutarate. The polypeptide is Probable N-succinyldiaminopimelate aminotransferase DapC (dapC) (Mycobacterium tuberculosis (strain CDC 1551 / Oshkosh)).